The following is a 425-amino-acid chain: CDP-diacylglycerol--serine O-phosphatidyltransferase 1 (425 aa).

Basic and acidic residues predominate over residues 1–16; sequence MEPNGYRKERRKEQHL. The tract at residues 1–23 is disordered; the sequence is MEPNGYRKERRKEQHLGRMNGGG. 9 helical membrane-spanning segments follow: residues 42–62, 79–99, 105–125, 197–217, 227–247, 296–316, 321–341, 361–381, and 390–410; these read TISL…ALDP, WAMI…TVLI, IWRL…FLLF, PLLW…RHML, SIVL…MYTV, FIQV…TFFL, WIPP…LIAI, GAFC…CIKF, and MPLW…AFLL.

The protein belongs to the CDP-alcohol phosphatidyltransferase class-I family. As to expression, expressed in trichomes, leaf veins and root vasculature.

Its subcellular location is the endoplasmic reticulum membrane. It is found in the nucleus envelope. It catalyses the reaction a CDP-1,2-diacyl-sn-glycerol + L-serine = a 1,2-diacyl-sn-glycero-3-phospho-L-serine + CMP + H(+). It functions in the pathway phospholipid metabolism; phosphatidylethanolamine biosynthesis; phosphatidylethanolamine from CDP-diacylglycerol: step 1/2. Its function is as follows. Catalyzes a base-exchange reaction in which the polar head group of phosphatidylethanolamine (PE) or phosphatidylcholine (PC) is replaced by L-serine. Is essential for phosphatidylserine (PS) biosynthesis and PE seems to be the most plausible substrate. Plays an important role in microspore maturation. The sequence is that of CDP-diacylglycerol--serine O-phosphatidyltransferase 1 (PSS1) from Arabidopsis thaliana (Mouse-ear cress).